Here is a 132-residue protein sequence, read N- to C-terminus: DNA-entry nuclease inhibitor (132 aa).

As to quaternary structure, this protein is a subunit of a 75 kDa protein complex, which governs binding and entry of donor DNA. The complex is a tetramer of two subunits of the DNA-entry nuclease and two subunits of a competence-specific protein. Only the complex is able to bind ds- and ss-DNA.

Its subcellular location is the cell membrane. Functionally, plays a role in the competence of cells to be transformed. It inhibits the activity of the DNA-entry nuclease. This is DNA-entry nuclease inhibitor (nin) from Bacillus subtilis (strain 168).